We begin with the raw amino-acid sequence, 217 residues long: uncharacterized protein (217 aa).

The ABC transporter domain occupies 2–216 (LCVKNVSLRL…AQWSENYNKL (215 aa)). 34–41 (GPSGCGKS) contributes to the ATP binding site.

It belongs to the ABC transporter superfamily.

Functionally, probably part of a binding-protein-dependent transport system YnjCD. Probably responsible for energy coupling to the transport system. This is an uncharacterized protein from Escherichia coli (strain K12).